Reading from the N-terminus, the 100-residue chain is Urease subunit gamma (100 aa).

It belongs to the urease gamma subunit family. As to quaternary structure, heterotrimer of UreA (gamma), UreB (beta) and UreC (alpha) subunits. Three heterotrimers associate to form the active enzyme.

Its subcellular location is the cytoplasm. It carries out the reaction urea + 2 H2O + H(+) = hydrogencarbonate + 2 NH4(+). It functions in the pathway nitrogen metabolism; urea degradation; CO(2) and NH(3) from urea (urease route): step 1/1. The protein is Urease subunit gamma of Bradyrhizobium diazoefficiens (strain JCM 10833 / BCRC 13528 / IAM 13628 / NBRC 14792 / USDA 110).